Consider the following 102-residue polypeptide: Urease subunit beta (102 aa).

This sequence belongs to the urease beta subunit family. As to quaternary structure, heterotrimer of UreA (gamma), UreB (beta) and UreC (alpha) subunits. Three heterotrimers associate to form the active enzyme.

The protein resides in the cytoplasm. The enzyme catalyses urea + 2 H2O + H(+) = hydrogencarbonate + 2 NH4(+). The protein operates within nitrogen metabolism; urea degradation; CO(2) and NH(3) from urea (urease route): step 1/1. In Blochmanniella pennsylvanica (strain BPEN), this protein is Urease subunit beta.